We begin with the raw amino-acid sequence, 435 residues long: Enolase (435 aa).

Glutamine 163 is a binding site for (2R)-2-phosphoglycerate. The Proton donor role is filled by glutamate 205. The Mg(2+) site is built by aspartate 243, glutamate 292, and aspartate 319. 4 residues coordinate (2R)-2-phosphoglycerate: lysine 344, arginine 373, serine 374, and lysine 395. Lysine 344 serves as the catalytic Proton acceptor.

The protein belongs to the enolase family. Mg(2+) is required as a cofactor.

The protein resides in the cytoplasm. It is found in the secreted. It localises to the cell surface. The catalysed reaction is (2R)-2-phosphoglycerate = phosphoenolpyruvate + H2O. It participates in carbohydrate degradation; glycolysis; pyruvate from D-glyceraldehyde 3-phosphate: step 4/5. Catalyzes the reversible conversion of 2-phosphoglycerate (2-PG) into phosphoenolpyruvate (PEP). It is essential for the degradation of carbohydrates via glycolysis. This chain is Enolase, found in Streptococcus uberis (strain ATCC BAA-854 / 0140J).